Here is a 380-residue protein sequence, read N- to C-terminus: MKKIYFIAGEMSGDFIGGHIIQNLKSNEGLEFTGIGGQYMEEAGNFKSLFTITAINFIGFIEIIPHLLKIKKLIDKTVENIINSKVDLLITIDSPGFTYRVAKRVRKFLPNLKIIHIVAPSVWAYKAGRAVDYAKIYDCLFALLPFEPPYFTKVGLDCRYIGHPILEQEFYRDKIALRKEFKIDDNESILCVTFGTRKGEILRHLPIFITAIQKISKDYKNLRIIFPLVHPDHEAIIKPFLENVQFNYLFLSSERLKAYAVSDLALAKSGTNTLEISASGTPMVVAYKVNIISFFIIMFLIKIKYVSLINIMAGSAIIPEFIQFNCRANLISNKLKELLSNSQKRDNQVVESQKILQKLRFASDRSPSYIAAKIIKQEFL.

This sequence belongs to the LpxB family.

It carries out the reaction a lipid X + a UDP-2-N,3-O-bis[(3R)-3-hydroxyacyl]-alpha-D-glucosamine = a lipid A disaccharide + UDP + H(+). The protein operates within bacterial outer membrane biogenesis; LPS lipid A biosynthesis. Condensation of UDP-2,3-diacylglucosamine and 2,3-diacylglucosamine-1-phosphate to form lipid A disaccharide, a precursor of lipid A, a phosphorylated glycolipid that anchors the lipopolysaccharide to the outer membrane of the cell. The sequence is that of Lipid-A-disaccharide synthase from Rickettsia typhi (strain ATCC VR-144 / Wilmington).